A 320-amino-acid polypeptide reads, in one-letter code: UDP-3-O-acyl-N-acetylglucosamine deacetylase (320 aa).

Zn(2+) contacts are provided by H92, H251, and D255. The Proton donor role is filled by H278.

This sequence belongs to the LpxC family. The cofactor is Zn(2+).

The enzyme catalyses a UDP-3-O-[(3R)-3-hydroxyacyl]-N-acetyl-alpha-D-glucosamine + H2O = a UDP-3-O-[(3R)-3-hydroxyacyl]-alpha-D-glucosamine + acetate. The protein operates within glycolipid biosynthesis; lipid IV(A) biosynthesis; lipid IV(A) from (3R)-3-hydroxytetradecanoyl-[acyl-carrier-protein] and UDP-N-acetyl-alpha-D-glucosamine: step 2/6. Functionally, catalyzes the hydrolysis of UDP-3-O-myristoyl-N-acetylglucosamine to form UDP-3-O-myristoylglucosamine and acetate, the committed step in lipid A biosynthesis. This chain is UDP-3-O-acyl-N-acetylglucosamine deacetylase, found in Psychrobacter cryohalolentis (strain ATCC BAA-1226 / DSM 17306 / VKM B-2378 / K5).